The primary structure comprises 219 residues: UPF0376 protein C36C5.12 (219 aa).

Over M1–S20 the chain is Cytoplasmic. Residues F21–A43 form a helical; Signal-anchor for type II membrane protein membrane-spanning segment. Topologically, residues E44–G219 are extracellular. 2 N-linked (GlcNAc...) asparagine glycosylation sites follow: N104 and N204.

It belongs to the UPF0376 family.

Its subcellular location is the membrane. This chain is UPF0376 protein C36C5.12, found in Caenorhabditis elegans.